The following is a 239-amino-acid chain: Pyrroloquinoline-quinone synthase (239 aa).

It belongs to the PqqC family.

It carries out the reaction 6-(2-amino-2-carboxyethyl)-7,8-dioxo-1,2,3,4,7,8-hexahydroquinoline-2,4-dicarboxylate + 3 O2 = pyrroloquinoline quinone + 2 H2O2 + 2 H2O + H(+). The protein operates within cofactor biosynthesis; pyrroloquinoline quinone biosynthesis. Ring cyclization and eight-electron oxidation of 3a-(2-amino-2-carboxyethyl)-4,5-dioxo-4,5,6,7,8,9-hexahydroquinoline-7,9-dicarboxylic-acid to PQQ. The chain is Pyrroloquinoline-quinone synthase from Gluconobacter oxydans (strain 621H) (Gluconobacter suboxydans).